The chain runs to 406 residues: Succinylornithine transaminase (406 aa).

Lys-252 is subject to N6-(pyridoxal phosphate)lysine.

Belongs to the class-III pyridoxal-phosphate-dependent aminotransferase family. AstC subfamily. Pyridoxal 5'-phosphate serves as cofactor.

It catalyses the reaction N(2)-succinyl-L-ornithine + 2-oxoglutarate = N-succinyl-L-glutamate 5-semialdehyde + L-glutamate. The protein operates within amino-acid degradation; L-arginine degradation via AST pathway; L-glutamate and succinate from L-arginine: step 3/5. In terms of biological role, catalyzes the transamination of N(2)-succinylornithine and alpha-ketoglutarate into N(2)-succinylglutamate semialdehyde and glutamate. Can also act as an acetylornithine aminotransferase. This Citrobacter koseri (strain ATCC BAA-895 / CDC 4225-83 / SGSC4696) protein is Succinylornithine transaminase.